Reading from the N-terminus, the 359-residue chain is uncharacterized protein (359 aa).

Residues 1–17 (MLGRSLTSVLIVPTGIG) form the signal peptide. Cys18 carries N-palmitoyl cysteine lipidation. Residue Cys18 is the site of S-diacylglycerol cysteine attachment.

The protein resides in the cell membrane. This is an uncharacterized protein from Synechococcus sp. (strain ATCC 27144 / PCC 6301 / SAUG 1402/1) (Anacystis nidulans).